The following is a 189-amino-acid chain: dCTP deaminase, dUMP-forming (189 aa).

DCTP is bound by residues 101–106 (KSSLGR), Asp119, 127–129 (TLE), Gln148, Tyr162, and Gln174. Catalysis depends on Glu129, which acts as the Proton donor/acceptor. The segment at 163–189 (GSSEAGSKYQGQRGPTPSKAYLNFNRS) is disordered.

This sequence belongs to the dCTP deaminase family. As to quaternary structure, homotrimer.

It carries out the reaction dCTP + 2 H2O = dUMP + NH4(+) + diphosphate. It participates in pyrimidine metabolism; dUMP biosynthesis; dUMP from dCTP: step 1/1. Functionally, bifunctional enzyme that catalyzes both the deamination of dCTP to dUTP and the hydrolysis of dUTP to dUMP without releasing the toxic dUTP intermediate. The chain is dCTP deaminase, dUMP-forming from Rhodococcus erythropolis (strain PR4 / NBRC 100887).